The following is a 267-amino-acid chain: 3-methyl-2-oxobutanoate hydroxymethyltransferase (267 aa).

Positions 46 and 85 each coordinate Mg(2+). 3-methyl-2-oxobutanoate contacts are provided by residues 46 to 47, Asp-85, and Lys-115; that span reads DS. Mg(2+) is bound at residue Glu-117. The active-site Proton acceptor is Glu-184.

It belongs to the PanB family. In terms of assembly, homodecamer; pentamer of dimers. It depends on Mg(2+) as a cofactor.

It is found in the cytoplasm. It carries out the reaction 3-methyl-2-oxobutanoate + (6R)-5,10-methylene-5,6,7,8-tetrahydrofolate + H2O = 2-dehydropantoate + (6S)-5,6,7,8-tetrahydrofolate. Its pathway is cofactor biosynthesis; (R)-pantothenate biosynthesis; (R)-pantoate from 3-methyl-2-oxobutanoate: step 1/2. Its function is as follows. Catalyzes the reversible reaction in which hydroxymethyl group from 5,10-methylenetetrahydrofolate is transferred onto alpha-ketoisovalerate to form ketopantoate. The sequence is that of 3-methyl-2-oxobutanoate hydroxymethyltransferase from Syntrophotalea carbinolica (strain DSM 2380 / NBRC 103641 / GraBd1) (Pelobacter carbinolicus).